The sequence spans 222 residues: uncharacterized protein (222 aa).

A run of 4 helical transmembrane segments spans residues 25 to 45 (LLWL…PATA), 80 to 100 (LLGA…ALIY), 111 to 131 (FAIM…FPLL), and 160 to 180 (LALT…VPFF).

Its subcellular location is the cell membrane. This is an uncharacterized protein from Bacillus subtilis (strain 168).